We begin with the raw amino-acid sequence, 1028 residues long: Beta-galactosidase (1028 aa).

Residues asparagine 104 and aspartate 203 each contribute to the substrate site. Position 203 (aspartate 203) interacts with Na(+). 3 residues coordinate Mg(2+): glutamate 418, histidine 420, and glutamate 463. Residues glutamate 463 and 539-542 each bind substrate; that span reads EYAH. The active-site Proton donor is the glutamate 463. The Nucleophile role is filled by glutamate 539. Asparagine 599 contributes to the Mg(2+) binding site. Na(+) contacts are provided by phenylalanine 603 and asparagine 606. The substrate site is built by asparagine 606 and tryptophan 1004.

Belongs to the glycosyl hydrolase 2 family. In terms of assembly, homodimer. Mg(2+) is required as a cofactor. The cofactor is Mn(2+). It depends on Fe cation as a cofactor. Requires Na(+) as cofactor. K(+) serves as cofactor.

It carries out the reaction Hydrolysis of terminal non-reducing beta-D-galactose residues in beta-D-galactosides.. Completely inhibited by Hg(2+), Cu(2+) Ag(2+), and partially inhibited by Zn(2+), imidazole and EDTA. Activated by Ca(2+), Co(2+), Ni(2+). This beta-galactosidase is also able to catalyze glycosyl transfer to a series of acceptors, including hexose, pentose, beta- or alpha-disaccharides, hexahydroxy alcohol, cyclitol, and aromatic glycosides, resulting in the production of galacto-oligosaccharides (GOS). The chain is Beta-galactosidase (lacZ) from Enterobacter agglomerans (Erwinia herbicola).